The sequence spans 618 residues: Chaperone protein HtpG (618 aa).

The interval Met-1–Arg-331 is a; substrate-binding. The b stretch occupies residues Glu-332–Lys-541. The interval Met-542–Ile-618 is c.

This sequence belongs to the heat shock protein 90 family. Homodimer.

The protein localises to the cytoplasm. Functionally, molecular chaperone. Has ATPase activity. This chain is Chaperone protein HtpG, found in Wolinella succinogenes (strain ATCC 29543 / DSM 1740 / CCUG 13145 / JCM 31913 / LMG 7466 / NCTC 11488 / FDC 602W) (Vibrio succinogenes).